Reading from the N-terminus, the 206-residue chain is Ribosomal RNA large subunit methyltransferase E (206 aa).

Residues Gly60, Trp62, Asp80, Asp96, and Asp121 each contribute to the S-adenosyl-L-methionine site. Residue Lys161 is the Proton acceptor of the active site.

This sequence belongs to the class I-like SAM-binding methyltransferase superfamily. RNA methyltransferase RlmE family.

The protein resides in the cytoplasm. The catalysed reaction is uridine(2552) in 23S rRNA + S-adenosyl-L-methionine = 2'-O-methyluridine(2552) in 23S rRNA + S-adenosyl-L-homocysteine + H(+). Specifically methylates the uridine in position 2552 of 23S rRNA at the 2'-O position of the ribose in the fully assembled 50S ribosomal subunit. This chain is Ribosomal RNA large subunit methyltransferase E, found in Nitrosomonas eutropha (strain DSM 101675 / C91 / Nm57).